A 79-amino-acid chain; its full sequence is RNA-binding protein Hfq (79 aa).

The Sm domain maps to 9–69 (DTFLNHLRKE…ISTFTPQRPV (61 aa)).

The protein belongs to the Hfq family. Homohexamer.

Functionally, RNA chaperone that binds small regulatory RNA (sRNAs) and mRNAs to facilitate mRNA translational regulation in response to envelope stress, environmental stress and changes in metabolite concentrations. Also binds with high specificity to tRNAs. The sequence is that of RNA-binding protein Hfq from Brevibacillus brevis (strain 47 / JCM 6285 / NBRC 100599).